Reading from the N-terminus, the 198-residue chain is DnaJ homolog subfamily C member 12 (198 aa).

Residue Met1 is modified to N-acetylmethionine. Positions Asp14 to Arg79 constitute a J domain. The tract at residues Glu114–Leu177 is disordered. Positions Ser116–Pro125 are enriched in polar residues. Positions Asn126–Glu156 are enriched in basic and acidic residues. Ser160, Ser166, and Ser182 each carry phosphoserine.

Interacts with HSPA8. Interacts with TPH1. Interacts with TPH2. As to expression, highest levels of expression are detected in kidney, pineal gland, and raphe nuclei in the brain where it localizes to serotonerigic neurons.

Its subcellular location is the cytoplasm. In terms of biological role, probable co-chaperone that participates in the proper folding of biopterin-dependent aromatic amino acid hydroxylases, which include phenylalanine-4-hydroxylase (PAH), tyrosine 3-monooxygenase (TH) and peripheral and neuronal tryptophan hydroxylases (TPH1 and TPH2). The protein is DnaJ homolog subfamily C member 12 (Dnajc12) of Mus musculus (Mouse).